A 109-amino-acid chain; its full sequence is MNDLEFMDRAENLLKAVETSCDRINDQTLADIDSQRVGSMVTLVFSNKSQIVINLQKPLHEIWLAAKSGGYHYKFDNKQWLDTKGQGEFFANLSRCASEQAGCPLVLNS.

Belongs to the frataxin family.

Its function is as follows. Involved in iron-sulfur (Fe-S) cluster assembly. May act as a regulator of Fe-S biogenesis. The chain is Iron-sulfur cluster assembly protein CyaY from Albidiferax ferrireducens (strain ATCC BAA-621 / DSM 15236 / T118) (Rhodoferax ferrireducens).